The primary structure comprises 365 residues: U1 snRNP-associated protein usp109 (365 aa).

RRM domains are found at residues 3–79, 86–162, and 189–259; these read TSLW…VVPE, YMLF…SVKS, and TAVY…WARP.

Component of the U1 snRNP complex.

The protein localises to the nucleus. This chain is U1 snRNP-associated protein usp109 (usp109), found in Schizosaccharomyces pombe (strain 972 / ATCC 24843) (Fission yeast).